The following is a 347-amino-acid chain: Biotin synthase (347 aa).

The 219-residue stretch at Ala40–Arg258 folds into the Radical SAM core domain. [4Fe-4S] cluster-binding residues include Cys55, Cys59, and Cys62. Positions 99, 130, 190, and 262 each coordinate [2Fe-2S] cluster.

It belongs to the radical SAM superfamily. Biotin synthase family. As to quaternary structure, homodimer. [4Fe-4S] cluster is required as a cofactor. It depends on [2Fe-2S] cluster as a cofactor.

The enzyme catalyses (4R,5S)-dethiobiotin + (sulfur carrier)-SH + 2 reduced [2Fe-2S]-[ferredoxin] + 2 S-adenosyl-L-methionine = (sulfur carrier)-H + biotin + 2 5'-deoxyadenosine + 2 L-methionine + 2 oxidized [2Fe-2S]-[ferredoxin]. Its pathway is cofactor biosynthesis; biotin biosynthesis; biotin from 7,8-diaminononanoate: step 2/2. Catalyzes the conversion of dethiobiotin (DTB) to biotin by the insertion of a sulfur atom into dethiobiotin via a radical-based mechanism. The polypeptide is Biotin synthase (Stenotrophomonas maltophilia (strain K279a)).